We begin with the raw amino-acid sequence, 672 residues long: uncharacterized protein (672 aa).

A signal peptide spans 1–24 (MKTLKTLKIFIIICIASVSLASFA). 6 helical membrane-spanning segments follow: residues 226 to 246 (IIGAALILYTMFFAFNMALNK), 254 to 274 (IALFVIKFLLVAYFSIGLGPL), 410 to 430 (IILAAGLVFSVIFLSILLYFI), 436 to 456 (CMITIYVMTYISPIFIPMALF), 469 to 489 (VCISCALQPAVVAGFIALLIT), and 562 to 582 (VVSILAELLCVLVFSVIFYYF). Residues 626-672 (ASQGKPSVGDKPDVGGKRKEGEQQGGDSESGAGGGLADLASGSGGGK) form a disordered region. The segment covering 633 to 647 (VGDKPDVGGKRKEGE) has biased composition (basic and acidic residues). The segment covering 656–672 (GAGGGLADLASGSGGGK) has biased composition (gly residues).

Belongs to the TrbL/VirB6 family.

It localises to the cell membrane. This is an uncharacterized protein from Rickettsia felis (strain ATCC VR-1525 / URRWXCal2) (Rickettsia azadi).